The primary structure comprises 131 residues: C-type natriuretic peptide 1 (131 aa).

The signal sequence occupies residues 1-22 (MLYPALLCAALLLIAPLGHTEG). A propeptide spanning residues 23–109 (RTLHPSPDAI…KRAVMDRSRR (87 aa)) is cleaved from the precursor. Cys115 and Cys131 are disulfide-bonded.

The protein belongs to the natriuretic peptide family. In terms of tissue distribution, expressed in brain and to a low extent in atrium.

The protein localises to the secreted. Its function is as follows. Exhibits natriuretic and vasodepressant activity. Has a cGMP-stimulating activity. The sequence is that of C-type natriuretic peptide 1 from Oncorhynchus mykiss (Rainbow trout).